Consider the following 130-residue polypeptide: Protein ApaG (130 aa).

The ApaG domain maps to 3 to 127 (KAETRGISVT…FSLDSPHVRR (125 aa)).

The sequence is that of Protein ApaG from Methylobacterium radiotolerans (strain ATCC 27329 / DSM 1819 / JCM 2831 / NBRC 15690 / NCIMB 10815 / 0-1).